Consider the following 255-residue polypeptide: tRNA (guanine-N(7)-)-methyltransferase (255 aa).

S-adenosyl-L-methionine-binding residues include glutamate 86, glutamate 111, aspartate 138, and aspartate 161. Residue aspartate 161 is part of the active site. Substrate-binding positions include lysine 165, aspartate 197, and 234–237; that span reads TKFE.

The protein belongs to the class I-like SAM-binding methyltransferase superfamily. TrmB family.

The enzyme catalyses guanosine(46) in tRNA + S-adenosyl-L-methionine = N(7)-methylguanosine(46) in tRNA + S-adenosyl-L-homocysteine. It functions in the pathway tRNA modification; N(7)-methylguanine-tRNA biosynthesis. Catalyzes the formation of N(7)-methylguanine at position 46 (m7G46) in tRNA. The sequence is that of tRNA (guanine-N(7)-)-methyltransferase from Pasteurella multocida (strain Pm70).